The primary structure comprises 307 residues: Thymidylate synthase (307 aa).

A disordered region spans residues 1-22 (MLVEGSELQSGAQQPRTEAPQH). A compositionally biased stretch (polar residues) spans 7–16 (ELQSGAQQPR). R44 is a binding site for dUMP. S108 is subject to Phosphoserine. Residues 169 to 170 (RR), 189 to 190 (CH), 209 to 212 (RSGD), N220, and 250 to 252 (HIY) each bind dUMP. Catalysis depends on C189, which acts as the Nucleophile. D212 lines the (6R)-5,10-methylene-5,6,7,8-tetrahydrofolate pocket. Residues K286 and K302 each participate in a glycyl lysine isopeptide (Lys-Gly) (interchain with G-Cter in SUMO2) cross-link. A306 lines the (6R)-5,10-methylene-5,6,7,8-tetrahydrofolate pocket.

It belongs to the thymidylate synthase family. In terms of assembly, homodimer.

The protein resides in the nucleus. It localises to the cytoplasm. Its subcellular location is the mitochondrion. It is found in the mitochondrion matrix. The protein localises to the mitochondrion inner membrane. It catalyses the reaction dUMP + (6R)-5,10-methylene-5,6,7,8-tetrahydrofolate = 7,8-dihydrofolate + dTMP. It functions in the pathway pyrimidine metabolism; dTTP biosynthesis. In terms of biological role, catalyzes the reductive methylation of 2'-deoxyuridine 5'-monophosphate (dUMP) to thymidine 5'-monophosphate (dTMP), using the cosubstrate, 5,10- methylenetetrahydrofolate (CH2H4folate) as a 1-carbon donor and reductant and contributes to the de novo mitochondrial thymidylate biosynthesis pathway. The chain is Thymidylate synthase (Tyms) from Rattus norvegicus (Rat).